We begin with the raw amino-acid sequence, 278 residues long: uncharacterized protein (278 aa).

Belongs to the manganese catalase family.

This is an uncharacterized protein from Bacillus subtilis (strain 168).